Here is a 275-residue protein sequence, read N- to C-terminus: Dermonecrotic toxin SpaSicTox-betaIIA2 (275 aa).

H5 is an active-site residue. The Mg(2+) site is built by E25 and D27. Residue H41 is the Nucleophile of the active site. 2 disulfides stabilise this stretch: C45/C51 and C47/C190. D85 is a Mg(2+) binding site.

Belongs to the arthropod phospholipase D family. Class II subfamily. Mg(2+) is required as a cofactor. In terms of tissue distribution, expressed by the venom gland.

It localises to the secreted. It catalyses the reaction an N-(acyl)-sphingosylphosphocholine = an N-(acyl)-sphingosyl-1,3-cyclic phosphate + choline. It carries out the reaction an N-(acyl)-sphingosylphosphoethanolamine = an N-(acyl)-sphingosyl-1,3-cyclic phosphate + ethanolamine. The catalysed reaction is a 1-acyl-sn-glycero-3-phosphocholine = a 1-acyl-sn-glycero-2,3-cyclic phosphate + choline. The enzyme catalyses a 1-acyl-sn-glycero-3-phosphoethanolamine = a 1-acyl-sn-glycero-2,3-cyclic phosphate + ethanolamine. Its function is as follows. Dermonecrotic toxins cleave the phosphodiester linkage between the phosphate and headgroup of certain phospholipids (sphingolipid and lysolipid substrates), forming an alcohol (often choline) and a cyclic phosphate. This toxin acts on sphingomyelin (SM). It may also act on ceramide phosphoethanolamine (CPE), lysophosphatidylcholine (LPC) and lysophosphatidylethanolamine (LPE), but not on lysophosphatidylserine (LPS), and lysophosphatidylglycerol (LPG). It acts by transphosphatidylation, releasing exclusively cyclic phosphate products as second products. Induces dermonecrosis, hemolysis, increased vascular permeability, edema, inflammatory response, and platelet aggregation. The polypeptide is Dermonecrotic toxin SpaSicTox-betaIIA2 (Sicarius patagonicus (Six-eyed sand spider)).